A 58-amino-acid polypeptide reads, in one-letter code: Large ribosomal subunit protein uL30 (58 aa).

Belongs to the universal ribosomal protein uL30 family. Part of the 50S ribosomal subunit.

The sequence is that of Large ribosomal subunit protein uL30 from Blochmanniella floridana.